A 658-amino-acid polypeptide reads, in one-letter code: MEFVGIDIGNYKTVIASSKENGKVYGDEQGKRSIRTVMELSTPVRRFGNGVTNDVEQSLDLRSRSFRDALEDKKGWGNLAMFMKYIDRVVKKNTPTHPPICMAVPAYFKERERRILVDIANTMDFKLEGLITDISAIAMFACVRRENMPSEFLLFDFGFSKTTAGLFSFEKNVLKPLYMKTVRVGSMQFDEKLIDIIVEKHSLEKSRLVREKIKRNLDKIKTTLNSTKCCNIQLFITENPLEVIITQEEYRNAVKSYLSDLDSFVSSVIKETEFNGLVEVVGGNSISFLIKEMLRDKVEYQVTLDVSDSTAIGAALGMACMSLRTRYSLHDIVGREISIRIQGEDVSPTVIFKSTELVEGNPKIVTYNRKESFVLEILEDGEVISTLNVVKGETKETKAIHVSFSIGKFGTVCVNSVECEESVDYEYKPFRISDIDLDDIKALEMKYRDGELGLERIGTMRNELETMAVGLGDALYNKFGKITNDEELNTVREVAMDLFDMPQSETVGQEEEVRNTILSKLEFISKKLSDYRDAAVEDLKKHKDMINEFRKEYGSVFTPSFYKLQGLLYKVDEYLKDFDLNLFNVKLFDESFIMEIKGDIQKYLEKAKLEIEEKRKEEERKSKKENAQEGTSSKPESKEESEAKEDNDEESDVASIDE.

A compositionally biased stretch (basic and acidic residues) spans lysine 614–alanine 627. Positions lysine 614–glutamate 658 are disordered. The span at glutamate 642 to glutamate 658 shows a compositional bias: acidic residues.

It belongs to the heat shock protein 70 family.

The protein localises to the cytoplasm. Its function is as follows. Required for normal growth at various temperatures. This is Heat shock protein homolog SSE1 (SSE1) from Encephalitozoon cuniculi (strain GB-M1) (Microsporidian parasite).